The chain runs to 999 residues: Golgin subfamily A member 2 (999 aa).

Positions 1–11 are enriched in pro residues; the sequence is MWPPRFPPPRP. 2 disordered regions span residues 1-80 and 244-288; these read MWPP…PAPP and ARQK…YNKD. An interaction with p115/USO1 region spans residues 1–86; that stretch reads MWPPRFPPPR…PAPPTAATDT (86 aa). 2 positions are modified to dimethylated arginine: Arg18 and Arg30. The Nuclear localization signal signature appears at 26 to 49; it reads KKKLREYQQKNSPGVPAGAKKKKK. Phosphoserine is present on residues Ser37, Ser66, Ser273, and Ser438. A coiled-coil region spans residues 147–895; that stretch reads LTSSNMKELE…VLRLVNERNE (749 aa). Polar residues predominate over residues 271-280; the sequence is TLSTVSTQQK. The segment at 444 to 468 is disordered; it reads SQMEEPPPPEPPAGPSEAEEQLQGE. The segment covering 448–457 has biased composition (pro residues); that stretch reads EPPPPEPPAG. 3 positions are modified to phosphoserine: Ser697, Ser934, and Ser978. The tract at residues 989–999 is interaction with GORASP1/GRASP65; that stretch reads DENDEVKIMVV.

This sequence belongs to the GOLGA2 family. In terms of assembly, homodimer, may assemble into homohexamers. Homotetramer; forms a parallel homotetramer with a flexible rod-like structure that can give rise to I- and Y-shaped conformations. Interacts with GORASP1/GRASP65. The homooligomer forms a complex with GORASP1 with a 1:1 stoichiometry. Interacts with RAB1B that has been activated by GTP-binding. Interacts with p115/USO1; interaction with p115/USO1 inhibits interaction with STX5 and/or RAB1B. Interacts with STX5. Interacts with ZFPL1. Interacts with AKAP450/AKAP9; leading to recruit AKAP450/AKAP9 to the cis-Golgi. In terms of processing, phosphorylated at Ser-37 by CDK1 at the onset of mitosis, inhibiting the interaction with p115/USO1 and triggering Golgi disassembly. A report however suggests that Golgi disassembly is independent of phosphorylation at Ser-37. Phosphorylated at Ser-37 in prophase as the Golgi complex starts to break down, and remains phosphorylated during further breakdown and partitioning of the Golgi fragments in metaphase and anaphase. In telophase, GM130 is dephosphorylated by PP2A as the Golgi fragments start to reassemble. Post-translationally, cleaved by caspases at the onset of apoptosis. Methylation by PRMT5 is required for Golgi ribbon formation. Widely expressed. Detected in brain, kidney, lung, liver, spleen, heart, skeletal muscle, thymus and pancreas. Detected in spermatocytes. Present in oocytes during all oocyte meiotic maturation (at protein level).

It is found in the golgi apparatus. It localises to the cis-Golgi network membrane. Its subcellular location is the endoplasmic reticulum-Golgi intermediate compartment membrane. The protein resides in the cytoplasm. The protein localises to the cytoskeleton. It is found in the spindle pole. Peripheral membrane component of the cis-Golgi stack that acts as a membrane skeleton that maintains the structure of the Golgi apparatus, and as a vesicle thether that facilitates vesicle fusion to the Golgi membrane. Required for normal protein transport from the endoplasmic reticulum to the Golgi apparatus and the cell membrane. Together with p115/USO1 and STX5, involved in vesicle tethering and fusion at the cis-Golgi membrane to maintain the stacked and inter-connected structure of the Golgi apparatus. Plays a central role in mitotic Golgi disassembly: phosphorylation at Ser-37 by CDK1 at the onset of mitosis inhibits the interaction with p115/USO1, preventing tethering of COPI vesicles and thereby inhibiting transport through the Golgi apparatus during mitosis. Also plays a key role in spindle pole assembly and centrosome organization. Promotes the mitotic spindle pole assembly by activating the spindle assembly factor TPX2 to nucleate microtubules around the Golgi and capture them to couple mitotic membranes to the spindle: upon phosphorylation at the onset of mitosis, GOLGA2 interacts with importin-alpha via the nuclear localization signal region, leading to recruit importin-alpha to the Golgi membranes and liberate the spindle assembly factor TPX2 from importin-alpha. TPX2 then activates AURKA kinase and stimulates local microtubule nucleation. Upon filament assembly, nascent microtubules are further captured by GOLGA2, thus linking Golgi membranes to the spindle. Regulates the meiotic spindle pole assembly, probably via the same mechanism. Also regulates the centrosome organization. Also required for the Golgi ribbon formation and glycosylation of membrane and secretory proteins. The sequence is that of Golgin subfamily A member 2 (Golga2) from Mus musculus (Mouse).